The sequence spans 269 residues: tRNA pseudouridine synthase A (269 aa).

Residue Asp-51 is the Nucleophile of the active site. Substrate is bound at residue Tyr-109.

Belongs to the tRNA pseudouridine synthase TruA family. As to quaternary structure, homodimer.

The catalysed reaction is uridine(38/39/40) in tRNA = pseudouridine(38/39/40) in tRNA. Its function is as follows. Formation of pseudouridine at positions 38, 39 and 40 in the anticodon stem and loop of transfer RNAs. The polypeptide is tRNA pseudouridine synthase A (Haemophilus influenzae (strain 86-028NP)).